Reading from the N-terminus, the 312-residue chain is MNTPSDETRKPPQGKRFAERLPKWLRQVLPTGPVFAQTDTTIKRTGMATVCEEALCPNRACCWSRKTATYLALGDACTRRCGFCNIDFTKKPISPDPEEPQKIAESAKILQLKHIVLTMVARDDLEDGGASFLVRIIDTLHQELPESTVEVLASDFQGNIDALHTLLDSGLTIYNHNVETVERLTPVVRHKATYRRSLFMLEQAAMYLPDLKIKSGIMVGLGEQESEVKQTLKDLADHGVKIVTIGQYLRPSRSHIPVKSYVTPETFDYYRTIGTSLGLFVYAGPFVRSSFNADIVLHNLENKQSDVAKMQN.

[4Fe-4S] cluster contacts are provided by cysteine 51, cysteine 56, cysteine 62, cysteine 77, cysteine 81, cysteine 84, and serine 290. The 218-residue stretch at 63–280 (WSRKTATYLA…RTIGTSLGLF (218 aa)) folds into the Radical SAM core domain.

It belongs to the radical SAM superfamily. Lipoyl synthase family. The cofactor is [4Fe-4S] cluster.

The protein resides in the cytoplasm. The enzyme catalyses [[Fe-S] cluster scaffold protein carrying a second [4Fe-4S](2+) cluster] + N(6)-octanoyl-L-lysyl-[protein] + 2 oxidized [2Fe-2S]-[ferredoxin] + 2 S-adenosyl-L-methionine + 4 H(+) = [[Fe-S] cluster scaffold protein] + N(6)-[(R)-dihydrolipoyl]-L-lysyl-[protein] + 4 Fe(3+) + 2 hydrogen sulfide + 2 5'-deoxyadenosine + 2 L-methionine + 2 reduced [2Fe-2S]-[ferredoxin]. Its pathway is protein modification; protein lipoylation via endogenous pathway; protein N(6)-(lipoyl)lysine from octanoyl-[acyl-carrier-protein]: step 2/2. Functionally, catalyzes the radical-mediated insertion of two sulfur atoms into the C-6 and C-8 positions of the octanoyl moiety bound to the lipoyl domains of lipoate-dependent enzymes, thereby converting the octanoylated domains into lipoylated derivatives. The polypeptide is Lipoyl synthase (Chlamydia caviae (strain ATCC VR-813 / DSM 19441 / 03DC25 / GPIC) (Chlamydophila caviae)).